The primary structure comprises 301 residues: WD repeat-containing protein SL1-17 (301 aa).

WD repeat units lie at residues 11–54 (AHKE…LKCL), 59–98 (GHRLGVISVDINSTGTLAASSSLDSQILLWDLETGRLTKT), 101–140 (GDPADTWTIAFSPDSRFLATGSHTGCVNMINVQTAQKEGS), 143–182 (LEGKFVYXLAYISDGSKLAAGTINGLVSICDLETGSVQFL), 184–223 (GHATPVRSVSFSPDGRLLASASDDKQIKVFDVRDGRLVIP), 227–266 (GHKGWVVSVDFASDNRHLVTASTDCSVRIWDLASKEEKHC), and 269–300 (THEDQVWCARYSPQGNNIISVGDDRSIMIYQC).

The protein is WD repeat-containing protein SL1-17 of Schistosoma mansoni (Blood fluke).